A 122-amino-acid polypeptide reads, in one-letter code: Large ribosomal subunit protein uL14 (122 aa).

Belongs to the universal ribosomal protein uL14 family. Part of the 50S ribosomal subunit. Forms a cluster with proteins L3 and L19. In the 70S ribosome, L14 and L19 interact and together make contacts with the 16S rRNA in bridges B5 and B8.

In terms of biological role, binds to 23S rRNA. Forms part of two intersubunit bridges in the 70S ribosome. This Acidiphilium cryptum (strain JF-5) protein is Large ribosomal subunit protein uL14.